Consider the following 140-residue polypeptide: MGGDGKVFTLSEVSQHSSAKDCWIVIDGKVYDVTKFLDDHPGGDEVILTSTGKDATDDFEDVGHSSTAKAMLDEYYVGDIDTATVPVKAKFVPPTSTKAVATQDKSSDFVIKLLQFLVPLLILGLAFGIRYYTKTKAPSS.

Positions 5 to 81 constitute a Cytochrome b5 heme-binding domain; the sequence is GKVFTLSEVS…LDEYYVGDID (77 aa). Residues His40 and His64 each coordinate heme. The helical transmembrane segment at 109–129 threads the bilayer; that stretch reads FVIKLLQFLVPLLILGLAFGI.

It belongs to the cytochrome b5 family. Interacts with CER1, BI-1, FAH1 and FAH2. Expressed in roots, stems, leaves, flowers and siliques.

Its subcellular location is the endoplasmic reticulum membrane. Its function is as follows. Membrane bound hemoprotein which function as an electron carrier for several membrane bound oxygenases, including fatty acid desaturases. This chain is Cytochrome B5 isoform D, found in Arabidopsis thaliana (Mouse-ear cress).